The chain runs to 743 residues: 1,4-alpha-glucan branching enzyme GlgB (743 aa).

Asp-416 (nucleophile) is an active-site residue. Glu-469 serves as the catalytic Proton donor.

The protein belongs to the glycosyl hydrolase 13 family. GlgB subfamily. As to quaternary structure, monomer.

The enzyme catalyses Transfers a segment of a (1-&gt;4)-alpha-D-glucan chain to a primary hydroxy group in a similar glucan chain.. It participates in glycan biosynthesis; glycogen biosynthesis. Functionally, catalyzes the formation of the alpha-1,6-glucosidic linkages in glycogen by scission of a 1,4-alpha-linked oligosaccharide from growing alpha-1,4-glucan chains and the subsequent attachment of the oligosaccharide to the alpha-1,6 position. In Shewanella baltica (strain OS195), this protein is 1,4-alpha-glucan branching enzyme GlgB.